We begin with the raw amino-acid sequence, 330 residues long: Phosphate acyltransferase (330 aa).

This sequence belongs to the PlsX family. Homodimer. Probably interacts with PlsY.

Its subcellular location is the cytoplasm. The catalysed reaction is a fatty acyl-[ACP] + phosphate = an acyl phosphate + holo-[ACP]. It functions in the pathway lipid metabolism; phospholipid metabolism. Its function is as follows. Catalyzes the reversible formation of acyl-phosphate (acyl-PO(4)) from acyl-[acyl-carrier-protein] (acyl-ACP). This enzyme utilizes acyl-ACP as fatty acyl donor, but not acyl-CoA. The sequence is that of Phosphate acyltransferase from Streptococcus pneumoniae serotype 2 (strain D39 / NCTC 7466).